Consider the following 310-residue polypeptide: HTH-type transcriptional regulator CbbR (310 aa).

Residues 7–64 (ITLKQLRALVAVAGSASLTGGATRLGLTPPAIHSQIRNLEEAFGVPLLHRPPETGSFT) form the HTH lysR-type domain. A DNA-binding region (H-T-H motif) is located at residues 24 to 43 (LTGGATRLGLTPPAIHSQIR).

This sequence belongs to the LysR transcriptional regulatory family.

Its function is as follows. Transcriptional activator for the cbb operon for RuBisCO and other Calvin cycle genes. This Cereibacter sphaeroides (Rhodobacter sphaeroides) protein is HTH-type transcriptional regulator CbbR (cbbR).